A 422-amino-acid chain; its full sequence is Testin (422 aa).

Positions 92 to 199 (MILTNPVPAK…GDVKLPGELE (108 aa)) constitute a PET domain. The interval 198-224 (LETKATDKNNVNSGDRSTSAAVGAMED) is disordered. Residues 205–217 (KNNVNSGDRSTSA) show a composition bias toward polar residues. 3 LIM zinc-binding domains span residues 234–297 (YSCY…CDSE), 299–359 (PRCA…KHAA), and 362–422 (QGCH…KMMS).

The protein belongs to the prickle / espinas / testin family.

Its subcellular location is the cytoplasm. It localises to the cell junction. The protein localises to the focal adhesion. In terms of biological role, scaffold protein that may play a role in cell adhesion, cell spreading and in the reorganization of the actin cytoskeleton. May play a role in the regulation of cell proliferation. May inhibit cell growth. This chain is Testin (TES), found in Gallus gallus (Chicken).